Consider the following 504-residue polypeptide: MFS antiporter QDR2 (504 aa).

Positions 1-14 (MLSTTQSVTEPTEV) are enriched in polar residues. A disordered region spans residues 1-23 (MLSTTQSVTEPTEVTSKKVEDIE). The Cytoplasmic segment spans residues 1 to 41 (MLSTTQSVTEPTEVTSKKVEDIEKENDEETPYSIFTSYDRL). A helical transmembrane segment spans residues 42–62 (VLIVILSLIGFWSTISSPIYF). Residues 63-75 (PALPTLTSYFHTS) lie on the Extracellular side of the membrane. The helical transmembrane segment at 76–96 (SSIMNISVVAYLIFQGIAPTI) threads the bilayer. The Cytoplasmic portion of the chain corresponds to 97–106 (SSNLADTFGR). A helical transmembrane segment spans residues 107-129 (RPVILASIIVFCASCVAISQTNV). Topologically, residues 130 to 132 (YWL) are extracellular. The helical transmembrane segment at 133–155 (LAVLRCIQAAGIAAVISISSGVA) threads the bilayer. The Cytoplasmic segment spans residues 156–169 (GDVCTRANRGSMVG). Residues 170-190 (AVAGLQLVGNGIGGLVGAALI) traverse the membrane as a helical segment. Topologically, residues 191 to 198 (SSFNSWRS) are extracellular. A helical transmembrane segment spans residues 199–219 (IFIFLTIGGGVTFILAIFILP). Over 220-278 (ETSRKLVGNGSVVPKNILNKSPYIYLPHFKKRMNNDITTIVPATRFDLLGPLKIFFQKN) the chain is Cytoplasmic. Residues 279–299 (VFCTLLPVGIHFAAWTMVLTS) form a helical membrane-spanning segment. Residues 300 to 311 (LSTELESRYHYS) are Extracellular-facing. The chain crosses the membrane as a helical span at residues 312-332 (VMHVGLIYLPQGIACIAGSLV). Residues 333–370 (VGKSLDWYYRYRKTIYDQEVECLPLDERPQFNIVATRL) are Cytoplasmic-facing. The helical transmembrane segment at 371–391 (TLSVVPALLMIIGLVIFGWCI) threads the bilayer. Topologically, residues 392 to 396 (QYKRH) are extracellular. A helical transmembrane segment spans residues 397–417 (IISIIISTILVSFSASVFIAI). Over 418 to 438 (CTTMLVDLYPNNGSGSTSCLN) the chain is Cytoplasmic. Residues 439–456 (LMRCWLAALGAGVLDSMI) traverse the membrane as a helical segment. At 457 to 460 (NAMN) the chain is on the extracellular side. A helical membrane pass occupies residues 461 to 483 (VGGTYTVVAGFCILFDLALIYVL). Residues 484-504 (HNAKKKFSNSGPTTTKSPPKQ) are Cytoplasmic-facing.

The protein belongs to the major facilitator superfamily. CAR1 family.

It localises to the cell membrane. MFS antiporter that does not display functional linkage as drug transporter and performs functions that significantly affect biofilm development and virulence. No substrate for transport has been identified yet, but plays an important role in the growth in the host. This is MFS antiporter QDR2 (QDR2) from Candida albicans (strain SC5314 / ATCC MYA-2876) (Yeast).